The sequence spans 365 residues: tRNA/tmRNA (uracil-C(5))-methyltransferase (365 aa).

Positions 189, 217, 222, 238, and 298 each coordinate S-adenosyl-L-methionine. Residue Cys323 is the Nucleophile of the active site. The Proton acceptor role is filled by Glu357.

The protein belongs to the class I-like SAM-binding methyltransferase superfamily. RNA M5U methyltransferase family. TrmA subfamily.

It carries out the reaction uridine(54) in tRNA + S-adenosyl-L-methionine = 5-methyluridine(54) in tRNA + S-adenosyl-L-homocysteine + H(+). The enzyme catalyses uridine(341) in tmRNA + S-adenosyl-L-methionine = 5-methyluridine(341) in tmRNA + S-adenosyl-L-homocysteine + H(+). Dual-specificity methyltransferase that catalyzes the formation of 5-methyluridine at position 54 (m5U54) in all tRNAs, and that of position 341 (m5U341) in tmRNA (transfer-mRNA). This chain is tRNA/tmRNA (uracil-C(5))-methyltransferase, found in Pseudoalteromonas atlantica (strain T6c / ATCC BAA-1087).